Here is a 395-residue protein sequence, read N- to C-terminus: uncharacterized protein (395 aa).

Residues 1–18 (MKHVIMLYFIAAATLFSS) form the signal peptide. C19 carries N-palmitoyl cysteine lipidation. C19 carries the S-diacylglycerol cysteine lipid modification.

The protein resides in the cell outer membrane. In terms of biological role, may be involved in ulvan degradation. Ulvan is the main polysaccharide component of the Ulvales (green seaweed) cell wall. It is composed of disaccharide building blocks comprising 3-sulfated rhamnose (Rha3S) linked to D-glucuronic acid (GlcA), L-iduronic acid (IduA), or D-xylose (Xyl). This is an uncharacterized protein from Formosa agariphila (strain DSM 15362 / KCTC 12365 / LMG 23005 / KMM 3901 / M-2Alg 35-1).